Here is a 381-residue protein sequence, read N- to C-terminus: KRR1 small subunit processome component homolog (381 aa).

Positions 1 to 51 are disordered; that stretch reads MASPSLERPEKGAGKSEFRNQKPKPENQDESELLTVPDGWKEPAFSKEDNP. Ala-2 carries the post-translational modification N-acetylalanine. Residues Ser-3 and Ser-5 each carry the phosphoserine modification. Composition is skewed to basic and acidic residues over residues 7 to 27 and 39 to 51; these read ERPE…KPEN and GWKE…EDNP. Residue Lys-24 forms a Glycyl lysine isopeptide (Lys-Gly) (interchain with G-Cter in SUMO2) linkage. A KH domain is found at 154–206; that stretch reads KERFVKRRQRLIGPKGSTLKALELLTNCYIMVQGNTVSAIGPFSGLKEVRKVV. Over residues 250–262 the composition is skewed to basic residues; that stretch reads NVNKRKEPKKKTV. Disordered regions lie at residues 250 to 278 and 309 to 338; these read NVNK…ESQI and AISK…ASTE. Glycyl lysine isopeptide (Lys-Gly) (interchain with G-Cter in SUMO2) cross-links involve residues Lys-340 and Lys-369.

This sequence belongs to the KRR1 family. In terms of assembly, part of the small subunit (SSU) processome, composed of more than 70 proteins and the RNA chaperone small nucleolar RNA (snoRNA) U3. (Microbial infection) Directly interacts with HIV-1 protein VPR. Also identified in a complex with NR3C1 and HIV-1 protein VPR.

The protein resides in the nucleus. Its subcellular location is the nucleolus. It localises to the cytoplasm. Its function is as follows. Part of the small subunit (SSU) processome, first precursor of the small eukaryotic ribosomal subunit. During the assembly of the SSU processome in the nucleolus, many ribosome biogenesis factors, an RNA chaperone and ribosomal proteins associate with the nascent pre-rRNA and work in concert to generate RNA folding, modifications, rearrangements and cleavage as well as targeted degradation of pre-ribosomal RNA by the RNA exosome. The chain is KRR1 small subunit processome component homolog from Homo sapiens (Human).